The following is a 403-amino-acid chain: Neuromedin U receptor homolog nmur-2 (403 aa).

Topologically, residues 1-27 are extracellular; that stretch reads MSQCTVEYNVSEITEYVLSTLGERCQS. Residues 28–48 traverse the membrane as a helical segment; the sequence is AGIVIPTVIIYGTIFLLGLFG. Residues 49–68 are Cytoplasmic-facing; the sequence is NICTCIVIAANKSMHNPTNY. The chain crosses the membrane as a helical span at residues 69–89; sequence YLFSLAVSDIIALILGLPMEF. The Extracellular segment spans residues 90-109; it reads YQSLDYSYPYRFSEGICKAR. A helical membrane pass occupies residues 110–130; that stretch reads AFLIEFTSYASIMIICCFSFE. At 131 to 151 the chain is on the cytoplasmic side; it reads RWLAICHPLRSKIFSTLWRAN. A helical membrane pass occupies residues 152–172; that stretch reads VLIILAWTISFVCALPIAFIV. The Extracellular segment spans residues 173 to 216; it reads QINKLPLPEDAKYQPWTNKVSTDGIFVLHTEFCAMNQSRPDQQK. Residues 217 to 237 traverse the membrane as a helical segment; that stretch reads MIIIFAFTVFFVIPAIAIVIM. The Cytoplasmic segment spans residues 238 to 268; it reads YAHIAVQLESSEIDLKGDKMVKKRRNKSNRT. A helical transmembrane segment spans residues 269-289; the sequence is VLKMLLSVVITFFICWLPFHI. Over 290 to 304 the chain is Extracellular; that stretch reads QRLLSVYTTWSETTT. Residues 305 to 325 form a helical membrane-spanning segment; sequence ISPPVQFLSMIVFYISGFCYY. The Cytoplasmic segment spans residues 326–403; the sequence is SNSAANPILY…PHRKLEVHNY (78 aa).

The protein belongs to the G-protein coupled receptor 1 family.

The protein localises to the membrane. Functionally, putative G protein-coupled receptor for pyrokinin-like neuropeptide derived from the processing of the neuropeptide precursor capa-1. This is Neuromedin U receptor homolog nmur-2 from Caenorhabditis elegans.